Consider the following 550-residue polypeptide: Endonuclease/exonuclease/phosphatase family domain-containing protein 1 (550 aa).

In terms of domain architecture, HhH spans 39-68; it reads ERLNINTATEEELMTLPGVNRGVAQNIVEY. The span at 194–213 shows a compositional bias: polar residues; sequence STNTNGGFTHPSPTSFSVQS. Positions 194–216 are disordered; the sequence is STNTNGGFTHPSPTSFSVQSDEP.

In Danio rerio (Zebrafish), this protein is Endonuclease/exonuclease/phosphatase family domain-containing protein 1 (eepd1).